The chain runs to 2157 residues: Conidial yellow pigment biosynthesis polyketide synthase (2157 aa).

Positions 8-244 (YLFGDQTGDF…VMVPIHGPFH (237 aa)) are N-terminal acylcarrier protein transacylase domain (SAT). The Ketosynthase family 3 (KS3) domain maps to 376 to 807 (LSKIAIIGMS…GGNTALLLED (432 aa)). Residues Cys548, His683, and His725 each act as for beta-ketoacyl synthase activity in the active site. Residues 912–1232 (FLFTGQGAQY…LSSLYLAGVD (321 aa)) form a malonyl-CoA:ACP transacylase (MAT) domain region. Ser1001 serves as the catalytic For acyl/malonyl transferase activity. A product template (PT) domain region spans residues 1290-1603 (TTSAQRVVES…RKILDIALPP (314 aa)). An N-terminal hotdog fold region spans residues 1294-1425 (QRVVESRDDG…CEVKLFDCMA (132 aa)). Residues 1294–1598 (QRVVESRDDG…FQALSRKILD (305 aa)) enclose the PKS/mFAS DH domain. Residue His1326 is the Proton acceptor; for dehydratase activity of the active site. Positions 1453 to 1598 (AHRLRRGMVY…FQALSRKILD (146 aa)) are C-terminal hotdog fold. Asp1511 (proton donor; for dehydratase activity) is an active-site residue. Residues 1607-1638 (SKAQTSPIQSSAPQKPIETAKPTSRPAPPVTM) form a disordered region. Polar residues predominate over residues 1608 to 1619 (KAQTSPIQSSAP). Positions 1645–1722 (SAGPSVVVRA…DFKRFVTQLS (78 aa)) constitute a Carrier 1 domain. Ser1682 carries the O-(pantetheine 4'-phosphoryl)serine modification. The tract at residues 1725 to 1760 (VASDSSSTDRESEYSFNGDSCSGLSSPASPGTVSPP) is disordered. The segment covering 1741–1759 (NGDSCSGLSSPASPGTVSP) has biased composition (polar residues). One can recognise a Carrier 2 domain in the interval 1767 to 1844 (IHENGTMKEI…QIETALDLKP (78 aa)). At Ser1804 the chain carries O-(pantetheine 4'-phosphoryl)serine. The tract at residues 1847-1888 (VPTAVPQSQPITLPQSQSTKQLSTRPTSSSDNHPPATSILLQ) is disordered. Residues 1851–1878 (VPQSQPITLPQSQSTKQLSTRPTSSSDN) show a composition bias toward polar residues. The tract at residues 1877–2149 (DNHPPATSIL…ELATFMKNAL (273 aa)) is claisen cyclase domain. The For thioesterase activity role is filled by Ser1967.

Pantetheine 4'-phosphate serves as cofactor.

It carries out the reaction 6 malonyl-CoA + acetyl-CoA + 6 H(+) = naphtopyrone YWA1 + 6 CO2 + 7 CoA + H2O. The protein operates within polyketide biosynthesis; heptaketide naphthopyrone YWA1 biosynthesis. In terms of biological role, non-reducing polyketide synthase that condenses acetate units to form a heptaketide naphthopyrene YWA1, a yellow pigment found in mature asexual spores (conidia), via a polyketomethylene intermediate step. This chain is Conidial yellow pigment biosynthesis polyketide synthase, found in Emericella nidulans (strain FGSC A4 / ATCC 38163 / CBS 112.46 / NRRL 194 / M139) (Aspergillus nidulans).